An 830-amino-acid chain; its full sequence is DNA replication licensing factor MCM6 (830 aa).

The C4-type zinc finger occupies 159–186 (CLDCGNVVKNVEQQFKYTEPIICVNATC). Residues 349 to 555 (FFNKIVDSIC…NTDYHIAHHI (207 aa)) form the MCM domain. An ATP-binding site is contributed by 399 to 406 (GDPSCAKS). The short motif at 531-534 (SRFD) is the Arginine finger element. The segment at 671 to 710 (DFQDADDGTNVPADNDAGQPTEMDAAPQQDGPENEQAADT) is disordered.

It belongs to the MCM family. In terms of assembly, component of the minichromosome maintenance (MCM) complex, a heterotetramer composed of MCM2, MCM3, MCM4, MCM5, MCM6 and MCM7.

It localises to the nucleus. The catalysed reaction is ATP + H2O = ADP + phosphate + H(+). Functionally, probable component of the MCM2-7 complex (MCM complex) that may function as a DNA helicase and which is essential to undergo a single round of replication initiation and elongation per cell cycle in eukaryotic cells. The sequence is that of DNA replication licensing factor MCM6 (MCM6) from Oryza sativa subsp. indica (Rice).